The primary structure comprises 182 residues: ATP synthase subunit b, chloroplastic (182 aa).

A helical membrane pass occupies residues 36–56 (ILLLLLGLMYVLKEFLGSILV).

The protein belongs to the ATPase B chain family. F-type ATPases have 2 components, F(1) - the catalytic core - and F(0) - the membrane proton channel. F(1) has five subunits: alpha(3), beta(3), gamma(1), delta(1), epsilon(1). F(0) has four main subunits: a(1), b(1), b'(1) and c(10-14). The alpha and beta chains form an alternating ring which encloses part of the gamma chain. F(1) is attached to F(0) by a central stalk formed by the gamma and epsilon chains, while a peripheral stalk is formed by the delta, b and b' chains.

It localises to the plastid. It is found in the chloroplast thylakoid membrane. In terms of biological role, f(1)F(0) ATP synthase produces ATP from ADP in the presence of a proton or sodium gradient. F-type ATPases consist of two structural domains, F(1) containing the extramembraneous catalytic core and F(0) containing the membrane proton channel, linked together by a central stalk and a peripheral stalk. During catalysis, ATP synthesis in the catalytic domain of F(1) is coupled via a rotary mechanism of the central stalk subunits to proton translocation. Its function is as follows. Component of the F(0) channel, it forms part of the peripheral stalk, linking F(1) to F(0). This Gracilaria tenuistipitata var. liui (Red alga) protein is ATP synthase subunit b, chloroplastic.